Here is a 443-residue protein sequence, read N- to C-terminus: Protein Z-dependent protease inhibitor (443 aa).

Positions 1–23 (MKVVPSLLLSVLLAQVWLVPGLA) are cleaved as a signal peptide. A disordered region spans residues 24–66 (PSPQSPETPAPQNQTSRVVQAPREEEEDEQEASEEKAGDEEKA). Residue N36 is glycosylated (N-linked (GlcNAc...) asparagine). S56 is modified (phosphoserine). Residues 56 to 66 (SEEKAGDEEKA) show a composition bias toward basic and acidic residues. Positions 136 to 153 (TKPGLLPSLFKGLRETLS) are heparin-binding. N-linked (GlcNAc...) asparagine glycosylation is found at N180 and N295.

Belongs to the serpin family. In terms of processing, phosphorylated by FAM20C in the extracellular medium.

The protein localises to the secreted. In terms of biological role, inhibits activity of the coagulation protease factor Xa in the presence of PROZ, calcium and phospholipids. Also inhibits factor XIa in the absence of cofactors. The protein is Protein Z-dependent protease inhibitor (SERPINA10) of Pongo abelii (Sumatran orangutan).